The chain runs to 66 residues: uncharacterized protein (66 aa).

It to M.jannaschii MJ0582.

This is an uncharacterized protein from Methanocaldococcus jannaschii (strain ATCC 43067 / DSM 2661 / JAL-1 / JCM 10045 / NBRC 100440) (Methanococcus jannaschii).